A 460-amino-acid polypeptide reads, in one-letter code: Mercuric reductase (460 aa).

The 65-residue stretch at 1-65 (MTHLKITGMT…AVAGLGYKAM (65 aa)) folds into the HMA domain. Cysteine 11 and cysteine 14 together coordinate a metal cation. Residues alanine 110, glycine 130, and threonine 135 each coordinate FAD. A disulfide bond links cysteine 136 and cysteine 141. 2 residues coordinate FAD: lysine 145 and alanine 211. Positions 457 and 458 each coordinate Hg(2+).

The protein belongs to the class-I pyridine nucleotide-disulfide oxidoreductase family. Homodimer. Requires FAD as cofactor.

The catalysed reaction is Hg + NADP(+) + H(+) = Hg(2+) + NADPH. Its function is as follows. Resistance to Hg(2+) in bacteria appears to be governed by a specialized system which includes mercuric reductase. MerA protein is responsible for volatilizing mercury as Hg(0). The sequence is that of Mercuric reductase (merA) from Serratia marcescens.